The primary structure comprises 517 residues: MAKIDLSNFDKIIVLDFGSQYNQLITRRIRDFGIYSELLPHTITAEEVKKIAPKGIIFSGGPNSVYDENALDVDPEIFELGIPILGICYGMQLMTQKLGGTVEKAGEAEYGSAHIEVKEADSPLYKGLPEKQVVWMSHGDLVTKVPEGFEVLASSKNCPIASMADPDRKFYAVQFHAEVRNSEYGLDILRRFAFDVCGAKDNWTMDDFIKLSVDSIREEVGNANVILGISGGVDSSVTATLLHKAIGSQLTAIFVDHGLLRKNESDEVMAALKEGLGVNIVRVDAKDRFMSKLAGVTDPEKKRKIIGNEFVQVFNDEAKKIKDAKFLAQGTLYTDVIESGTDTAHTIKSHHNVGGLPEDMQFKLIEPLRQLFKDEVRVLGEKLGLPHDLVWRQPFPGPGLAIRVIGEITEEKLRIVRDADAILREEVKNAGLQESIWQYFVALPGMRSVGVMGDGRTYDYAVCIRAVTSIDGMTADFAQIPWDVLQKISVRIVNEVKQVNRVLYDVTSKPPATIEYE.

Residues 11–202 (KIIVLDFGSQ…AFDVCGAKDN (192 aa)) enclose the Glutamine amidotransferase type-1 domain. Cysteine 88 (nucleophile) is an active-site residue. Catalysis depends on residues histidine 176 and glutamate 178. The region spanning 203–392 (WTMDDFIKLS…LGLPHDLVWR (190 aa)) is the GMPS ATP-PPase domain. Position 230-236 (230-236 (SGGVDSS)) interacts with ATP.

Homodimer.

The catalysed reaction is XMP + L-glutamine + ATP + H2O = GMP + L-glutamate + AMP + diphosphate + 2 H(+). It functions in the pathway purine metabolism; GMP biosynthesis; GMP from XMP (L-Gln route): step 1/1. Catalyzes the synthesis of GMP from XMP. This Lactobacillus delbrueckii subsp. bulgaricus (strain ATCC 11842 / DSM 20081 / BCRC 10696 / JCM 1002 / NBRC 13953 / NCIMB 11778 / NCTC 12712 / WDCM 00102 / Lb 14) protein is GMP synthase [glutamine-hydrolyzing].